A 503-amino-acid polypeptide reads, in one-letter code: Sugar phosphate exchanger 3 (503 aa).

A helical membrane pass occupies residues 20-40; the sequence is YTHHHLAAFLLTFFSYSLLHA. N-linked (GlcNAc...) asparagine glycans are attached at residues asparagine 62 and asparagine 71. 5 helical membrane-spanning segments follow: residues 87–107, 119–139, 152–172, 183–203, and 214–234; these read TLFLGLLDTIFLFAYAVGLFI, LVLTFGMCSSAITMFVFGTLT, LVWIVNGLLQSTGWPCVVAIM, FVFGLWSACASVGNILGAFLA, and AFLVTASVQFAGGIIIFFGLV. The N-linked (GlcNAc...) asparagine glycan is linked to asparagine 275. The next 6 membrane-spanning stretches (helical) occupy residues 300–322, 342–362, 367–387, 395–415, 437–457, and 466–486; these read GVLLYSLAYACLKLVNYSFFFWL, IWYDIGGIVGGTVQGLISDLM, PVLTVSLLLAVGALFGYSHSP, FIMSITGFFIGGPSNMISSAI, GIVDGTGSIGAAMGQFLVPLI, and VFYFFIFMICMTTVFMVPLIV.

It belongs to the major facilitator superfamily. Organophosphate:Pi antiporter (OPA) (TC 2.A.1.4) family.

Its subcellular location is the endoplasmic reticulum membrane. The protein resides in the lysosome membrane. Unlike the other SLC37 members, seems to lack glucose-6-phosphate antiporter activity. The protein is Sugar phosphate exchanger 3 (slc37a3) of Xenopus laevis (African clawed frog).